The following is a 188-amino-acid chain: Threonylcarbamoyl-AMP synthase (188 aa).

The YrdC-like domain maps to 3 to 188 (QLHPSDIKDI…RSGKILRNGQ (186 aa)).

It belongs to the SUA5 family. TsaC subfamily.

Its subcellular location is the cytoplasm. The enzyme catalyses L-threonine + hydrogencarbonate + ATP = L-threonylcarbamoyladenylate + diphosphate + H2O. Its function is as follows. Required for the formation of a threonylcarbamoyl group on adenosine at position 37 (t(6)A37) in tRNAs that read codons beginning with adenine. Catalyzes the conversion of L-threonine, HCO(3)(-)/CO(2) and ATP to give threonylcarbamoyl-AMP (TC-AMP) as the acyladenylate intermediate, with the release of diphosphate. The chain is Threonylcarbamoyl-AMP synthase from Shewanella baltica (strain OS195).